Consider the following 419-residue polypeptide: Caspase-12 (419 aa).

The CARD domain maps to 1–92; it reads MAARRTHERD…QLSLQFSNDE (92 aa). Ser-85 carries the post-translational modification Phosphoserine. The interval 88–113 is disordered; that stretch reads FSNDEDDGPQKICTPSSPSESKRKVE. Catalysis depends on residues His-250 and Cys-298.

This sequence belongs to the peptidase C14A family. Heterotetramer that consists of two anti-parallel arranged heterodimers, each one formed by two subunits (Potential). Interacts with TRAF2 under resting conditions; this interaction is reduced in ER stress conditions. In terms of tissue distribution, mainly expressed in skeletal muscle and lung.

Its function is as follows. Involved in the activation cascade of caspases responsible for apoptosis execution. This chain is Caspase-12 (Casp12), found in Mus musculus (Mouse).